The chain runs to 307 residues: Ubiquitin recognition factor in ER-associated degradation protein 1 (307 aa).

Met1 is modified (N-acetylmethionine). 5 positions are modified to phosphoserine: Ser129, Ser231, Ser245, Ser247, and Ser299. Disordered regions lie at residues Ser231–Arg256 and Gly288–Pro307.

This sequence belongs to the UFD1 family. In terms of assembly, heterodimer with NPLOC4, this heterodimer binds VCP and inhibits Golgi membrane fusion. Interacts with USP13. Interacts with ZFAND2B; probably through VCP. In terms of tissue distribution, found in adult heart, skeletal muscle and pancreas, and in fetal liver and kidney.

The protein localises to the nucleus. It is found in the cytoplasm. Its subcellular location is the cytosol. It functions in the pathway protein degradation; proteasomal ubiquitin-dependent pathway. Its function is as follows. Essential component of the ubiquitin-dependent proteolytic pathway which degrades ubiquitin fusion proteins. The ternary complex containing UFD1, VCP and NPLOC4 binds ubiquitinated proteins and is necessary for the export of misfolded proteins from the ER to the cytoplasm, where they are degraded by the proteasome. The NPLOC4-UFD1-VCP complex regulates spindle disassembly at the end of mitosis and is necessary for the formation of a closed nuclear envelope. It may be involved in the development of some ectoderm-derived structures. Acts as a negative regulator of type I interferon production via the complex formed with VCP and NPLOC4, which binds to RIGI and recruits RNF125 to promote ubiquitination and degradation of RIGI. This chain is Ubiquitin recognition factor in ER-associated degradation protein 1, found in Homo sapiens (Human).